The primary structure comprises 952 residues: Ubiquitin carboxyl-terminal hydrolase 15 (952 aa).

Ala2 is modified (N-acetylalanine). Residues 2–223 (AEGGAADLDI…KNEDGTWPRG (222 aa)) are mediates interaction with SART3. The 112-residue stretch at 7 to 118 (ADLDIQRSDI…GQEPIARKVV (112 aa)) folds into the DUSP domain. Residue Thr226 is modified to Phosphothreonine. The 645-residue stretch at 260 to 904 (CGLSNLGNTC…AAYVLFYQRQ (645 aa)) folds into the USP domain. Cys269 functions as the Nucleophile in the catalytic mechanism. Phosphothreonine is present on Thr573. The disordered stretch occupies residues 598 to 666 (TEGSLHCCKD…GDNDSENGLC (69 aa)). Residues 627–644 (METDEPDDESSQDQELPS) are compositionally biased toward acidic residues. His862 (proton acceptor) is an active-site residue. The disordered stretch occupies residues 923-952 (SAATGIPLESDEDSNDNDNDIENENCMHTN). Residues 931–945 (ESDEDSNDNDNDIEN) show a composition bias toward acidic residues. Residues Ser932 and Ser936 each carry the phosphoserine modification.

This sequence belongs to the peptidase C19 family. As to quaternary structure, a homodimer structure has been reported; however it is unclear whether the protein form a homodimer in vivo. Identified in a complex with the COP9 signalosome complex (CSN). Interacts with SMAD1, SMAD2 and SMAD3; the interaction is direct. Forms a complex with SMURF2 and SMAD7. Interacts with TGFBR1. Interacts with SART3; the interaction is direct. May interact with RNF20 and RNF40. May interact with PRKN. Interacts with INCA1. Phosphorylated. Phosphorylation protects against ubiquitination and subsequent degradation by the proteasome. Post-translationally, ubiquitinated, leading to degradation by the proteasome.

It localises to the cytoplasm. It is found in the nucleus. The protein resides in the mitochondrion. It catalyses the reaction Thiol-dependent hydrolysis of ester, thioester, amide, peptide and isopeptide bonds formed by the C-terminal Gly of ubiquitin (a 76-residue protein attached to proteins as an intracellular targeting signal).. Functionally, hydrolase that removes conjugated ubiquitin from target proteins and regulates various pathways such as the TGF-beta receptor signaling, NF-kappa-B and RNF41/NRDP1-PRKN pathways. Acts as a key regulator of TGF-beta receptor signaling pathway, but the precise mechanism is still unclear: according to a report, acts by promoting deubiquitination of monoubiquitinated R-SMADs (SMAD1, SMAD2 and/or SMAD3), thereby alleviating inhibition of R-SMADs and promoting activation of TGF-beta target genes. According to another reports, regulates the TGF-beta receptor signaling pathway by mediating deubiquitination and stabilization of TGFBR1, leading to an enhanced TGF-beta signal. Able to mediate deubiquitination of monoubiquitinated substrates, 'Lys-27'-, 'Lys-48'- and 'Lys-63'-linked polyubiquitin chains. May also regulate gene expression and/or DNA repair through the deubiquitination of histone H2B. Acts as an inhibitor of mitophagy by counteracting the action of parkin (PRKN): hydrolyzes cleavage of 'Lys-48'- and 'Lys-63'-linked polyubiquitin chains attached by parkin on target proteins such as MFN2, thereby reducing parkin's ability to drive mitophagy. Acts as an associated component of COP9 signalosome complex (CSN) and regulates different pathways via this association: regulates NF-kappa-B by mediating deubiquitination of NFKBIA and deubiquitinates substrates bound to VCP. Involved in endosome organization by mediating deubiquitination of SQSTM1: ubiquitinated SQSTM1 forms a molecular bridge that restrains cognate vesicles in the perinuclear region and its deubiquitination releases target vesicles for fast transport into the cell periphery. Acts as a negative regulator of antifungal immunity by mediating 'Lys-27'-linked deubiquitination of CARD9, thereby inactivating CARD9. This is Ubiquitin carboxyl-terminal hydrolase 15 (USP15) from Bos taurus (Bovine).